Consider the following 493-residue polypeptide: MERKFSDQELIRRNHLQELKDQNKNPFLATKVERSMSLKDFAEEYKNFSKEELHNMDLKKVTLAGRLIGVRQTFGIIQDFSTKLQIYIDKKNVDPEVFSTFKSLDIGDIVELQGVAMKTNSDEITLNVTNIKLVAKSLKVLPEKYHGLVDEEIKARQRYLDLIVNDESKNTFIKRSLIIREMRNWLDSQGFFEVETPVLQDILSGAAARPFITHHNTLDKQYYLRIATEIALKKCIVGGFEKVYEIGRIFRNEGMDSTHNPEFTSVELYVAYVDLWYIMQLTEDLIRHIATKLKLLNPTFRGFSVDLNKPFKKAHMVDLINEHVGVNFFEVKSDEQALELAKKHHVKLLDHQKNFGHIVNAFFETFVEEKLIEPTFVYGHPVQVSPLTKKNQEDPRFVDRFELFICQKEFANAYSEINDPIDQYERFVAQLEEAKLGNDEANELDMEFIEALEYGMPPTGGLGIGVDRLVMLLTSNDSIRNVLLFPHMKDKAK.

Residues E402 and E409 each contribute to the Mg(2+) site.

Belongs to the class-II aminoacyl-tRNA synthetase family. In terms of assembly, homodimer. Requires Mg(2+) as cofactor.

It localises to the cytoplasm. The catalysed reaction is tRNA(Lys) + L-lysine + ATP = L-lysyl-tRNA(Lys) + AMP + diphosphate. The chain is Lysine--tRNA ligase from Ureaplasma urealyticum serovar 10 (strain ATCC 33699 / Western).